The sequence spans 1393 residues: DNA-directed RNA polymerase subunit beta' (1393 aa).

The Zn(2+) site is built by C72, C74, C87, and C90. The Mg(2+) site is built by D463, D465, and D467. The Zn(2+) site is built by C812, C887, C894, and C897.

The protein belongs to the RNA polymerase beta' chain family. The RNAP catalytic core consists of 2 alpha, 1 beta, 1 beta' and 1 omega subunit. When a sigma factor is associated with the core the holoenzyme is formed, which can initiate transcription. Mg(2+) serves as cofactor. The cofactor is Zn(2+).

The catalysed reaction is RNA(n) + a ribonucleoside 5'-triphosphate = RNA(n+1) + diphosphate. DNA-dependent RNA polymerase catalyzes the transcription of DNA into RNA using the four ribonucleoside triphosphates as substrates. The polypeptide is DNA-directed RNA polymerase subunit beta' (Chlamydia abortus (strain DSM 27085 / S26/3) (Chlamydophila abortus)).